Consider the following 91-residue polypeptide: uncharacterized protein (91 aa).

This is an uncharacterized protein from Archaeoglobus fulgidus (strain ATCC 49558 / DSM 4304 / JCM 9628 / NBRC 100126 / VC-16).